The sequence spans 290 residues: Nucleotide-binding protein Sde_3181 (290 aa).

8–15 (GRSGSGKT) is an ATP binding site. GTP is bound at residue 60 to 63 (DARN).

The protein belongs to the RapZ-like family.

Its function is as follows. Displays ATPase and GTPase activities. The polypeptide is Nucleotide-binding protein Sde_3181 (Saccharophagus degradans (strain 2-40 / ATCC 43961 / DSM 17024)).